We begin with the raw amino-acid sequence, 860 residues long: DNA mismatch repair protein MutS (860 aa).

607–614 (GPNMSGKS) is a binding site for ATP.

Belongs to the DNA mismatch repair MutS family.

Its function is as follows. This protein is involved in the repair of mismatches in DNA. It is possible that it carries out the mismatch recognition step. This protein has a weak ATPase activity. This is DNA mismatch repair protein MutS from Listeria innocua serovar 6a (strain ATCC BAA-680 / CLIP 11262).